Here is a 629-residue protein sequence, read N- to C-terminus: 1-deoxy-D-xylulose-5-phosphate synthase (629 aa).

Thiamine diphosphate contacts are provided by residues His-79 and Ser-119–Ala-121. Asp-150 contributes to the Mg(2+) binding site. Residues Gly-151 to Ser-152, Asn-180, Tyr-292, and Glu-377 contribute to the thiamine diphosphate site. Asn-180 serves as a coordination point for Mg(2+).

It belongs to the transketolase family. DXPS subfamily. As to quaternary structure, homodimer. Mg(2+) serves as cofactor. The cofactor is thiamine diphosphate.

The enzyme catalyses D-glyceraldehyde 3-phosphate + pyruvate + H(+) = 1-deoxy-D-xylulose 5-phosphate + CO2. The protein operates within metabolic intermediate biosynthesis; 1-deoxy-D-xylulose 5-phosphate biosynthesis; 1-deoxy-D-xylulose 5-phosphate from D-glyceraldehyde 3-phosphate and pyruvate: step 1/1. In terms of biological role, catalyzes the acyloin condensation reaction between C atoms 2 and 3 of pyruvate and glyceraldehyde 3-phosphate to yield 1-deoxy-D-xylulose-5-phosphate (DXP). The polypeptide is 1-deoxy-D-xylulose-5-phosphate synthase (Tropheryma whipplei (strain TW08/27) (Whipple's bacillus)).